The chain runs to 249 residues: uncharacterized protein (249 aa).

This is an uncharacterized protein from Colorado tick fever virus (strain USA/Florio N-7180) (CTFV).